The primary structure comprises 290 residues: Picrinine-N-methytransferase (290 aa).

Positions 71–80 (MLDVGCGIGG) are SAM motif I. A Vacuolar targeting signal motif is present at residues 133–139 (DGTFDLV). The tract at residues 134 to 142 (GTFDLVFTI) is SAM motif II. The segment at 161-170 (VAAPGAPIVI) is SAM motif III.

Belongs to the class I-like SAM-binding methyltransferase superfamily. gTMT family. In terms of assembly, homodimer. In terms of tissue distribution, accumulates in tissues actively synthesizing monoterpenoid indole alkaloids (MIAs) (at protein level). Mainly expressed in young leaves and, to a lower extent, in roots and stems.

The protein resides in the vacuole membrane. The enzyme catalyses picrinine + S-adenosyl-L-methionine = ervincine + S-adenosyl-L-homocysteine + H(+). The protein operates within alkaloid biosynthesis; vindoline biosynthesis. S-adenosyl-L-methionine-dependent N-methyltransferase involved in the biosynthesis of biologically active monoterpenoid indole alkaloids (MIAs) natural products including vindoline. Catalyzes the conversion of picrinine to N-methylpicrinine (ervincine). Also accepts, with low efficiency, 21-hydroxycyclolochnericine and norajmaline as substrates. The polypeptide is Picrinine-N-methytransferase (Rauvolfia serpentina (Serpentine wood)).